Reading from the N-terminus, the 31-residue chain is Cycloviolacin-O6 (31 aa).

Positions 1 to 31 (GTLPCGESCVWIPCISAAVGCSCKSKVCYKN) form a cross-link, cyclopeptide (Gly-Asn). 3 cysteine pairs are disulfide-bonded: Cys-5/Cys-21, Cys-9/Cys-23, and Cys-14/Cys-28.

Post-translationally, this is a cyclic peptide.

In terms of biological role, probably participates in a plant defense mechanism. The polypeptide is Cycloviolacin-O6 (Viola odorata (Sweet violet)).